A 313-amino-acid polypeptide reads, in one-letter code: Probable myosin light chain kinase DDB_G0292624 (313 aa).

The 259-residue stretch at 6–264 (YELHKEIGKG…AKQALEHPWI (259 aa)) folds into the Protein kinase domain. Residues 12 to 20 (IGKGAFSVV) and Lys-35 contribute to the ATP site. The active-site Proton acceptor is Asp-125.

This sequence belongs to the protein kinase superfamily. CAMK Ser/Thr protein kinase family. CaMK subfamily.

It carries out the reaction L-seryl-[myosin light chain] + ATP = O-phospho-L-seryl-[myosin light chain] + ADP + H(+). It catalyses the reaction L-threonyl-[myosin light chain] + ATP = O-phospho-L-threonyl-[myosin light chain] + ADP + H(+). With respect to regulation, does not have a calmodulin-binding domain. May phosphorylate a specific serine in the N-terminus of a myosin light chain. This chain is Probable myosin light chain kinase DDB_G0292624, found in Dictyostelium discoideum (Social amoeba).